The following is a 186-amino-acid chain: UPF0200 protein Hbut_0338 (186 aa).

13-20 (GMPGSGKS) provides a ligand contact to ATP.

Belongs to the UPF0200 family.

The protein is UPF0200 protein Hbut_0338 of Hyperthermus butylicus (strain DSM 5456 / JCM 9403 / PLM1-5).